Consider the following 243-residue polypeptide: Probable septum site-determining protein MinC (243 aa).

The protein belongs to the MinC family. In terms of assembly, interacts with MinD and FtsZ.

Cell division inhibitor that blocks the formation of polar Z ring septums. Rapidly oscillates between the poles of the cell to destabilize FtsZ filaments that have formed before they mature into polar Z rings. Prevents FtsZ polymerization. The polypeptide is Probable septum site-determining protein MinC (Wigglesworthia glossinidia brevipalpis).